The sequence spans 394 residues: Actin-related protein 2-A (394 aa).

Residues 160-162 (GDG), 214-218 (RMIKE), and 305-310 (GGSTMY) contribute to the ATP site.

This sequence belongs to the actin family. ARP2 subfamily. Component of the Arp2/3 complex composed of actr2/arp2, actr3/arp3, arpc1 (arpc1a or arpc1b), arpc2, arpc3, arpc4 and arpc5.

It localises to the cytoplasm. It is found in the cytoskeleton. The protein resides in the cell projection. Its subcellular location is the nucleus. Its function is as follows. ATP-binding component of the Arp2/3 complex, a multiprotein complex that mediates actin polymerization upon stimulation by nucleation-promoting factor (NPF). The Arp2/3 complex mediates the formation of branched actin networks in the cytoplasm, providing the force for cell motility. Seems to contact the pointed end of the daughter actin filament. In addition to its role in the cytoplasmic cytoskeleton, the Arp2/3 complex also promotes actin polymerization in the nucleus, thereby regulating gene transcription and repair of damaged DNA. The Arp2/3 complex promotes homologous recombination (HR) repair in response to DNA damage by promoting nuclear actin polymerization, leading to drive motility of double-strand breaks (DSBs). The protein is Actin-related protein 2-A (actr2-a) of Xenopus laevis (African clawed frog).